A 332-amino-acid chain; its full sequence is NAD-dependent protein deacetylase hst2 (332 aa).

The Deacetylase sirtuin-type domain occupies 7–269 (KHVDSSKHLE…RALCKLLGWS (263 aa)). Residues 35 to 55 (GAGI…TGIY) and 118 to 121 (QNID) contribute to the NAD(+) site. The active-site Proton acceptor is histidine 138. The Zn(2+) site is built by cysteine 146, cysteine 149, cysteine 170, and cysteine 173. NAD(+) contacts are provided by residues 210 to 212 (GTS), 235 to 237 (NRE), and cysteine 255.

It belongs to the sirtuin family. Class I subfamily. The cofactor is Zn(2+).

The protein localises to the cytoplasm. The protein resides in the nucleus. It carries out the reaction N(6)-acetyl-L-lysyl-[protein] + NAD(+) + H2O = 2''-O-acetyl-ADP-D-ribose + nicotinamide + L-lysyl-[protein]. Functionally, NAD-dependent histone deacetylase, which could function in telomeric silencing, cell cycle progression and chromosome stability. The protein is NAD-dependent protein deacetylase hst2 (hst2) of Schizosaccharomyces pombe (strain 972 / ATCC 24843) (Fission yeast).